An 894-amino-acid polypeptide reads, in one-letter code: Leucine--tRNA ligase, mitochondrial (894 aa).

A mitochondrion-targeting transit peptide spans 1–9 (MLPRPSSRF). A 'HIGH' region motif is present at residues 56–66 (PYPSGVLHIGH). Positions 646–650 (KMSKS) match the 'KMSKS' region motif. Lys649 serves as a coordination point for ATP.

Belongs to the class-I aminoacyl-tRNA synthetase family.

It localises to the mitochondrion matrix. The catalysed reaction is tRNA(Leu) + L-leucine + ATP = L-leucyl-tRNA(Leu) + AMP + diphosphate. In Saccharomyces paradoxus (Yeast), this protein is Leucine--tRNA ligase, mitochondrial (NAM2).